Reading from the N-terminus, the 121-residue chain is Auxin-responsive protein SAUR32 (121 aa).

The protein belongs to the ARG7 family. As to expression, expressed in roots, leaves and stems.

The protein resides in the nucleus. Its subcellular location is the cytoplasm. Functionally, may play a role in the apical hook development. This Arabidopsis thaliana (Mouse-ear cress) protein is Auxin-responsive protein SAUR32.